The sequence spans 456 residues: tRNA (guanine(37)-N(1))-methyltransferase (456 aa).

S-adenosyl-L-methionine-binding positions include histidine 246, 284–285 (DL), 310–311 (DG), and asparagine 336.

This sequence belongs to the class I-like SAM-binding methyltransferase superfamily. TRM5/TYW2 family. Monomer.

The protein resides in the mitochondrion matrix. Its subcellular location is the nucleus. The protein localises to the cytoplasm. The enzyme catalyses guanosine(37) in tRNA + S-adenosyl-L-methionine = N(1)-methylguanosine(37) in tRNA + S-adenosyl-L-homocysteine + H(+). Its function is as follows. Specifically methylates the N1 position of guanosine-37 in various cytoplasmic and mitochondrial tRNAs. Methylation is not dependent on the nature of the nucleoside 5' of the target nucleoside. This is the first step in the biosynthesis of wybutosine (yW), a modified base adjacent to the anticodon of tRNAs and required for accurate decoding. The polypeptide is tRNA (guanine(37)-N(1))-methyltransferase (Ciona intestinalis (Transparent sea squirt)).